The chain runs to 706 residues: Envelope glycoprotein H (706 aa).

An N-terminal signal peptide occupies residues 1–18 (MQLLCVFCLVLLWEVGAA). At 19–682 (SLSEVKLHLD…LYEERAHVVL (664 aa)) the chain is on the virion surface side. Asn60 is a glycosylation site (N-linked (GlcNAc...) asparagine; by host). The interaction with gL stretch occupies residues 165 to 229 (DKFQYTGAMT…QSGDYSLVIV (65 aa)). The cysteines at positions 278 and 335 are disulfide-linked. An N-linked (GlcNAc...) asparagine; by host glycan is attached at Asn435. 2 disulfide bridges follow: Cys454–Cys478 and Cys534–Cys587. Residues Asn549 and Asn604 are each glycosylated (N-linked (GlcNAc...) asparagine; by host). Cys612 and Cys615 are oxidised to a cystine. Asn664 is a glycosylation site (N-linked (GlcNAc...) asparagine; by host). A helical transmembrane segment spans residues 683 to 703 (AIILYFIAFALGIFLVHKIVM). Over 704-706 (FFL) the chain is Intravirion.

It belongs to the herpesviridae glycoprotein H family. As to quaternary structure, interacts with glycoprotein L (gL); this interaction is necessary for the correct processing and cell surface expression of gH. The heterodimer gH/gL seems to interact with gB trimers during fusion. The heterodimer gH/gL interacts with host EPHA2 to facilitate virus internalization and fusion. Interacts with glycoprotein 42/BZLF2. Post-translationally, N-glycosylated, O-glycosylated, and sialylated.

The protein resides in the virion membrane. It localises to the host cell membrane. Its subcellular location is the host endosome membrane. Functionally, the heterodimer glycoprotein H-glycoprotein L is required for the fusion of viral and plasma membranes leading to virus entry into the host cell. Following initial binding to host receptor, membrane fusion is mediated by the fusion machinery composed of gB and the heterodimer gH/gL. May also be involved in the fusion between the virion envelope and the outer nuclear membrane during virion morphogenesis. The heterodimer gH/gL targets also host EPHA2 to promote viral entry. The protein is Envelope glycoprotein H of Homo sapiens (Human).